The sequence spans 337 residues: Protein MICROTUBULE BINDING PROTEIN 2C (337 aa).

Residues 80–147 form a disordered region; sequence RGSMTYTKMP…STSSLTEKDR (68 aa). Residues 89-103 show a composition bias toward basic and acidic residues; the sequence is PSRESLYKKTSEVKG. The segment covering 120–142 has biased composition (polar residues); that stretch reads KNVSSSQDGYAENFSTPSSTSSL. 3 coiled-coil regions span residues 143-194, 223-250, and 294-314; these read TEKD…MKKD, VEKL…LQGE, and LQKM…AKEN.

The protein belongs to the microtubule binding protein 2C family. Interacts with KN-1. Binds to tobacco mosaic virus movement protein (TMV-MP) at microtubules. As to expression, constitutively expressed in leaves.

The protein resides in the cytoplasm. It localises to the cytoskeleton. Its function is as follows. Prevents homeodomain proteins (e.g. STM) association to plasmodesmata and, consequently, cell-to-cell transport. Binds to RNA. Alters KN1 RNA-binding capacity. Regulates cytoskeleton (e.g. actin) organization that determinates cell shape. Interferes with cell-to-cell transport of tobacco mosaic virus movement protein (TMV-MP) by mediating its accumulation at microtubules, thus interfering with cell-to-cell virus movement. The polypeptide is Protein MICROTUBULE BINDING PROTEIN 2C (Nicotiana tabacum (Common tobacco)).